A 265-amino-acid chain; its full sequence is U6 snRNA phosphodiesterase 1 (265 aa).

The tract at residues 1–72 (MSAAPLVGYS…DSTKHGGRVR (72 aa)) is disordered. The span at 20–31 (DGMRTRPGDGSH) shows a compositional bias: basic and acidic residues. Catalysis depends on histidine 120, which acts as the Proton acceptor. 120–122 (HLS) contributes to the AMP binding site. UMP contacts are provided by residues glutamine 164, tyrosine 202, and 206-210 (SFHLS). Residues tyrosine 202 and 204–210 (DPSFHLS) contribute to the AMP site. Histidine 208 serves as the catalytic Proton donor.

It belongs to the 2H phosphoesterase superfamily. USB1 family. As to quaternary structure, interacts with PLRG1, CDC5L and PRPF19.

The protein resides in the nucleus. It carries out the reaction a 3'-end uridylyl-uridine-RNA = a 3'-end 2',3'-cyclophospho-uridine-RNA + uridine. The enzyme catalyses a 3'-end uridylyl-adenosine-RNA = a 3'-end 2',3'-cyclophospho-uridine-RNA + adenosine. Its activity is regulated as follows. 3'-5' RNA exonuclease activity is inhibited by a 3' phosphate terminated RNA. Its function is as follows. 3'-5' RNA exonuclease that trims the 3' end of oligo(U) and oligo(A) tracts of the pre-U6 small nuclear RNA (snRNA) molecule, leading to the formation of a mature U6 snRNA 3' end-terminated with a 2',3'-cyclic phosphate. Participates in the U6 snRNA 3' end processing that prevents U6 snRNA degradation. In addition also removes uridines from the 3' end of U6atac snRNA and possibly the vault RNA VTRNA1-1. This chain is U6 snRNA phosphodiesterase 1, found in Homo sapiens (Human).